A 356-amino-acid chain; its full sequence is MSTVTITDLARENVRNLTPYQSARRLGGNGDVWLNANEYPTAVEFQLTQQTLNRYPECQPKAVIENYAQYAGVKPEQVLVSRGADEGIELLIRAFCEPGKDAILYCPPTYGMYSVSAETIGVECRTVPTLDNWQLDLQGISDKLDGVKVVYVCSPNNPTGQLINPQDFRTLLELTRGKAIVVADEAYIEFCPQASLAGWLAEYPHLAILRTLSKAFALAGLRCGFTLANEEVINLLMKVIAPYPLSTPVADIAAQALSPQGIVAMRERVAQIIAEREYLIAALKEIPCVEQVFDSETNYILARFKASSAVFKSLWDQGIILRDQNKQPSLSGCLRITVGTREESQRVIDALRAEQV.

The residue at position 214 (lysine 214) is an N6-(pyridoxal phosphate)lysine.

It belongs to the class-II pyridoxal-phosphate-dependent aminotransferase family. Histidinol-phosphate aminotransferase subfamily. Homodimer. Pyridoxal 5'-phosphate is required as a cofactor.

It carries out the reaction L-histidinol phosphate + 2-oxoglutarate = 3-(imidazol-4-yl)-2-oxopropyl phosphate + L-glutamate. Its pathway is amino-acid biosynthesis; L-histidine biosynthesis; L-histidine from 5-phospho-alpha-D-ribose 1-diphosphate: step 7/9. This chain is Histidinol-phosphate aminotransferase, found in Escherichia coli O8 (strain IAI1).